A 102-amino-acid polypeptide reads, in one-letter code: MKIAVLGDSDTVLGFRLAGVHEAYAFEETPLDIERLKNKLNELIEREDVGIILITERLAEKVEIPDVKLPIILQVPDKSGSKLGEKALREIVRRAIGVELKR.

It belongs to the V-ATPase F subunit family. In terms of assembly, has multiple subunits with at least A(3), B(3), C, D, E, F, H, I and proteolipid K(x).

It is found in the cell membrane. Functionally, component of the A-type ATP synthase that produces ATP from ADP in the presence of a proton gradient across the membrane. The chain is A-type ATP synthase subunit F from Thermococcus kodakarensis (strain ATCC BAA-918 / JCM 12380 / KOD1) (Pyrococcus kodakaraensis (strain KOD1)).